The following is a 416-amino-acid chain: MIFKFSQKALVALYLVVGLAEAVPSKSRVVSRASTFDYNGIVRGVNIGGWLVLEPWITPSIFDNAGDAAVDEWTLTATLGQDQAKAVLSQHWSTFITQDDFQQIAQAGMNHVRIPIGYWAVSSLPDEPYVDGQLEYLDNAISWAREAGLKVVIDLHGAPGSQNGFDNSGRKGPIAWQQGDTVSQTVDAFRALAERYLPQSDVVTAIEALNEPNIPGGVSEAGLRDYYNQIADVVRQIDPGTSVFLSDGFLSTESWNGFKTGEDVVMDTHHYEMFDNYLISLDIDGHVKSACDFGKQIEGSDKPVVVGEWSGAVTDCTKHLNGKGVSTRYQGEYANNVKYGDCANTTQGSVADLSDQERTDTRRFIEAQLDAYEGKNGWLFWTWKTEGAPGWDMQDLLANGVFPSPLTDRQFPNQCA.

The first 22 residues, 1–22 (MIFKFSQKALVALYLVVGLAEA), serve as a signal peptide directing secretion. The active-site Proton donor is the Glu-211. Cystine bridges form between Cys-291-Cys-415 and Cys-316-Cys-342. Glu-308 acts as the Nucleophile in catalysis. Asn-344 is a glycosylation site (N-linked (GlcNAc...) asparagine).

This sequence belongs to the glycosyl hydrolase 5 (cellulase A) family. As to quaternary structure, monomer. It depends on Mn(2+) as a cofactor.

The protein localises to the secreted. It carries out the reaction Successive hydrolysis of beta-D-glucose units from the non-reducing ends of (1-&gt;3)-beta-D-glucans, releasing alpha-glucose.. Beta-glucanases participate in the metabolism of beta-glucan, the main structural component of the cell wall. It could also function biosynthetically as a transglycosylase. The sequence is that of Probable glucan 1,3-beta-glucosidase A (exgA) from Aspergillus fumigatus (strain ATCC MYA-4609 / CBS 101355 / FGSC A1100 / Af293) (Neosartorya fumigata).